The sequence spans 710 residues: Elongation factor G (710 aa).

The tr-type G domain maps to 8-297 (ERVRNIGIAA…AVVDYLPSPI (290 aa)). Residues 17–24 (AHIDAGKT), 96–100 (DTPGH), and 150–153 (NKMD) each bind GTP.

This sequence belongs to the TRAFAC class translation factor GTPase superfamily. Classic translation factor GTPase family. EF-G/EF-2 subfamily.

The protein localises to the cytoplasm. Its function is as follows. Catalyzes the GTP-dependent ribosomal translocation step during translation elongation. During this step, the ribosome changes from the pre-translocational (PRE) to the post-translocational (POST) state as the newly formed A-site-bound peptidyl-tRNA and P-site-bound deacylated tRNA move to the P and E sites, respectively. Catalyzes the coordinated movement of the two tRNA molecules, the mRNA and conformational changes in the ribosome. The protein is Elongation factor G of Synechococcus sp. (strain JA-3-3Ab) (Cyanobacteria bacterium Yellowstone A-Prime).